The primary structure comprises 323 residues: Breast cancer metastasis-suppressor 1-like protein (323 aa).

Positions 1–17 (MPVHSRGDKKETNHHDE) are enriched in basic and acidic residues. Positions 1 to 56 (MPVHSRGDKKETNHHDEMEVDYAENEGSSSEDEDTESSSVSEDGDSSEMDDEDCER) are disordered. Residues 18–53 (MEVDYAENEGSSSEDEDTESSSVSEDGDSSEMDDED) are compositionally biased toward acidic residues. Coiled-coil stretches lie at residues 52-84 (EDCE…KERL) and 149-180 (EKLL…ITSE). S197 is modified (phosphoserine). Glycyl lysine isopeptide (Lys-Gly) (interchain with G-Cter in SUMO2) cross-links involve residues K240 and K246.

It belongs to the BRMS1 family. Component of the Sin3/HDAC1 corepressor complex at least composed of BRMS1, BRMS1L and ING2/ING1L. Interacts with HDAC and SIN3A.

It localises to the nucleus. In terms of biological role, involved in the histone deacetylase (HDAC1)-dependent transcriptional repression activity. When overexpressed in lung cancer cell line that lacks p53/TP53 expression, inhibits cell growth. The chain is Breast cancer metastasis-suppressor 1-like protein (BRMS1L) from Bos taurus (Bovine).